Consider the following 592-residue polypeptide: Serine/threonine-protein kinase ksg1 (592 aa).

Residues 1–10 (MRNTHNPNET) show a composition bias toward polar residues. Residues 1–92 (MRNTHNPNET…NPSSGASTPN (92 aa)) are disordered. Residues 11–22 (EASEDAENDTQS) are compositionally biased toward acidic residues. Over residues 27 to 37 (SFDHGSSEKLN) the composition is skewed to basic and acidic residues. A compositionally biased stretch (polar residues) spans 42 to 68 (PKTQNSAIPQSNALNTTPNESTSQIDS). A phosphoserine mark is found at Ser-64 and Ser-69. The span at 80-92 (STPNPSSGASTPN) shows a compositional bias: polar residues. A Protein kinase domain is found at 99 to 366 (FKFGEILGEG…VDEIHQHPFF (268 aa)). Residues 109-111 (SYS) and Lys-128 contribute to the ATP site. The tract at residues 130-175 (LDKRHIIKEKKEKYVNIEKEALCILSKHPGFIKLFYTFQDAHNLYF) is PIF-pocket. Residues 178–180 (SLA) and Glu-184 contribute to the ATP site. Asp-223 (proton acceptor) is an active-site residue. Glu-227 and Asp-241 together coordinate ATP. In terms of domain architecture, PH spans 461 to 572 (ISKIGTLNVY…ELLDKASSIS (112 aa)).

This sequence belongs to the protein kinase superfamily. AGC Ser/Thr protein kinase family. PDPK1 subfamily.

The protein localises to the cytoplasm. The enzyme catalyses L-seryl-[protein] + ATP = O-phospho-L-seryl-[protein] + ADP + H(+). It catalyses the reaction L-threonyl-[protein] + ATP = O-phospho-L-threonyl-[protein] + ADP + H(+). In terms of biological role, involved in the control of sexual development and cell growth under stressed conditions. Phosphorylates AGC kinase gad8 at 'Thr-387', activating gad8 kinase activity and promoting sexual development. Phosphorylates AGC kinase psk1 at 'Ser-248', activating psk1 kinase activity and promoting phosphorylation of ribosomal protein S6. The sequence is that of Serine/threonine-protein kinase ksg1 from Schizosaccharomyces pombe (strain 972 / ATCC 24843) (Fission yeast).